The following is a 187-amino-acid chain: Elongation factor P (187 aa).

This sequence belongs to the elongation factor P family.

It is found in the cytoplasm. Its pathway is protein biosynthesis; polypeptide chain elongation. Its function is as follows. Involved in peptide bond synthesis. Stimulates efficient translation and peptide-bond synthesis on native or reconstituted 70S ribosomes in vitro. Probably functions indirectly by altering the affinity of the ribosome for aminoacyl-tRNA, thus increasing their reactivity as acceptors for peptidyl transferase. This chain is Elongation factor P, found in Syntrophus aciditrophicus (strain SB).